A 229-amino-acid polypeptide reads, in one-letter code: Triosephosphate isomerase (229 aa).

Substrate is bound at residue 16–18 (NFK). The active-site Electrophile is the histidine 100. Glutamate 148 functions as the Proton acceptor in the catalytic mechanism. Substrate-binding positions include isoleucine 153, glycine 188, and 209–210 (AS).

Belongs to the triosephosphate isomerase family. In terms of assembly, homotetramer; dimer of dimers.

Its subcellular location is the cytoplasm. It carries out the reaction D-glyceraldehyde 3-phosphate = dihydroxyacetone phosphate. Its pathway is carbohydrate biosynthesis; gluconeogenesis. It functions in the pathway carbohydrate degradation; glycolysis; D-glyceraldehyde 3-phosphate from glycerone phosphate: step 1/1. Involved in the gluconeogenesis. Catalyzes stereospecifically the conversion of dihydroxyacetone phosphate (DHAP) to D-glyceraldehyde-3-phosphate (G3P). This chain is Triosephosphate isomerase, found in Methanothermobacter thermautotrophicus (strain ATCC 29096 / DSM 1053 / JCM 10044 / NBRC 100330 / Delta H) (Methanobacterium thermoautotrophicum).